We begin with the raw amino-acid sequence, 497 residues long: tRNA (adenine(58)-N(1))-methyltransferase non-catalytic subunit TRM6 (497 aa).

A disordered region spans residues 69 to 102 (TNGGSLQPKKKKEEPTSETKEAGTDNRNIIDDGK). The span at 79–102 (KKEEPTSETKEAGTDNRNIIDDGK) shows a compositional bias: basic and acidic residues. Positions 94-104 (NRNIIDDGKSQ) are substrate. At threonine 107 the chain carries Phosphothreonine. 2 substrate regions span residues 145–154 (KYIKKKKKKY) and 175–182 (REPGKINH). Residues 276–354 (SSEPKDIASV…EKQRRQEEQK (79 aa)) are disordered. Residues serine 298 and serine 305 each carry the phosphoserine modification. Residues 311–354 (ESNHPEEQERMEIVSQDPDYKEPKESGSKKDYIQEKQRRQEEQK) are compositionally biased toward basic and acidic residues. Residues arginine 349 and arginine 377 each contribute to the substrate site. 2 substrate regions span residues 415 to 423 (RERGGVINL) and 434 to 441 (QVLPDRSH). The tract at residues 468–497 (PSLKSSTSTLESHKTEEPAAKKRKCPESDS) is disordered. Residues 478–497 (ESHKTEEPAAKKRKCPESDS) show a composition bias toward basic and acidic residues.

This sequence belongs to the TRM6/GCD10 family. Heterotetramer; composed of two copies of TRMT6 and two copies of TRMT61A.

It is found in the nucleus. Its function is as follows. Substrate-binding subunit of tRNA (adenine-N(1)-)-methyltransferase, which catalyzes the formation of N(1)-methyladenine at position 58 (m1A58) in initiator methionyl-tRNA. Together with the TRMT61A catalytic subunit, part of a mRNA N(1)-methyltransferase complex that mediates methylation of adenosine residues at the N(1) position of a small subset of mRNAs: N(1) methylation takes place in tRNA T-loop-like structures of mRNAs and is only present at low stoichiometries. This Bos taurus (Bovine) protein is tRNA (adenine(58)-N(1))-methyltransferase non-catalytic subunit TRM6 (TRMT6).